A 368-amino-acid polypeptide reads, in one-letter code: Microtubule-associated protein Jupiter (368 aa).

The residue at position 30 (Ser-30) is a Phosphoserine. At Thr-41 the chain carries Phosphothreonine. A compositionally biased stretch (basic and acidic residues) spans 81–93; it reads RRGQKSVDSHSRL. Positions 81 to 106 are disordered; the sequence is RRGQKSVDSHSRLFGEPSRPITPGKN. A Phosphothreonine modification is found at Thr-102. Residues Ser-111, Ser-146, and Ser-157 each carry the phosphoserine modification. Low complexity-rich tracts occupy residues 129–157 and 238–248; these read NGNT…VSSS and GRYGYSSQSRR. 3 disordered regions span residues 129 to 164, 196 to 256, and 316 to 368; these read NGNT…LKIN, SQGN…SPLN, and KPKK…SGLW. Residues 337-354 are compositionally biased toward polar residues; it reads GSDSAQTPTMNGANQVIN.

Belongs to the MAP Jupiter family.

It is found in the nucleus. Its subcellular location is the cytoplasm. It localises to the cytoskeleton. The protein localises to the spindle. In terms of biological role, binds to all microtubule populations. The chain is Microtubule-associated protein Jupiter from Drosophila willistoni (Fruit fly).